The following is a 268-amino-acid chain: Ribonuclease P protein subunit p30 (268 aa).

An N-acetylalanine modification is found at A2. Residues 247 to 268 (KPRPSEGDEDCLPASKKAKCEG) are disordered. Position 251 is a phosphoserine (S251).

This sequence belongs to the eukaryotic/archaeal RNase P protein component 3 family. As to quaternary structure, component of nuclear RNase P and RNase MRP ribonucleoproteins. RNase P consists of a catalytic RNA moiety and about 10 protein subunits; POP1, POP4, POP5, POP7, RPP14, RPP21, RPP25, RPP30, RPP38 and RPP40. Within the RNase P complex, POP1, POP7 and RPP25 form the 'finger' subcomplex, POP5, RPP14, RPP40 and homodimeric RPP30 form the 'palm' subcomplex, and RPP21, POP4 and RPP38 form the 'wrist' subcomplex. All subunits of the RNase P complex interact with the catalytic RNA. Several subunits of RNase P are also part of the RNase MRP complex. RNase MRP consists of a catalytic RNA moiety and about 8 protein subunits; POP1, POP7, RPP25, RPP30, RPP38, RPP40 and possibly also POP4 and POP5.

It is found in the nucleus. The protein resides in the nucleolus. Functionally, component of ribonuclease P, a ribonucleoprotein complex that generates mature tRNA molecules by cleaving their 5'-ends. Also a component of the MRP ribonuclease complex, which cleaves pre-rRNA sequences. The sequence is that of Ribonuclease P protein subunit p30 (RPP30) from Homo sapiens (Human).